Here is a 191-residue protein sequence, read N- to C-terminus: uncharacterized protein (191 aa).

The first 17 residues, 1–17 (MESIILSIAIFIGVLLG), serve as a signal peptide directing secretion. Positions 82 to 148 (TFSGSRTSPD…DVGAGSGSSI (67 aa)) are disordered. A helical membrane pass occupies residues 168–188 (VAVLITAAILSAPVTAIALLE).

The protein localises to the membrane. This is an uncharacterized protein from Saccharomyces cerevisiae (strain ATCC 204508 / S288c) (Baker's yeast).